The sequence spans 129 residues: Cytochrome b5 (129 aa).

Residues T8–K84 form the Cytochrome b5 heme-binding domain. Heme-binding residues include H43 and H67. A helical transmembrane segment spans residues G104–Y124.

Belongs to the cytochrome b5 family.

The protein resides in the endoplasmic reticulum membrane. The protein localises to the microsome membrane. Functionally, membrane bound hemoprotein which function as an electron carrier for several membrane bound oxygenases. The sequence is that of Cytochrome b5 (Cytb5) from Candida tropicalis (Yeast).